We begin with the raw amino-acid sequence, 37 residues long: Large ribosomal subunit protein bL36 (37 aa).

It belongs to the bacterial ribosomal protein bL36 family.

In Thermosynechococcus vestitus (strain NIES-2133 / IAM M-273 / BP-1), this protein is Large ribosomal subunit protein bL36.